Consider the following 572-residue polypeptide: MASAKTYVTKFKSFVILFFAPILLLPLIILVPDKFARCAYVIILMAIYWCTDVIPVAITSLLPVLLFPLLKVLDSKQVCVQYMTDTNMLFLGSLIVATAVERWELHKRIALRMLLFVGTKPSRLMLGFMFVTAFLSMWISNTATTAMMIPIVEAMLEQMVATNVAVDASQRTMELLDKNKASELPGSQVVFEDPSVQKQEDEETKNMYKAMNLCVCYAASIGGTATLTGTGPNVVLLGQMQELFPDSKDVMNFASWFAFALPNMLLMLVMAWLWLLCFYMRPNLKKTCICCGRKKKDTEKIASKVLYEEYRKLGPLSYAECNVLFCFGLLIILWFSRDPGFMPGWLSIAWIEGNTKHVTDATVAIFVAILLFIVPSQKPKFNFSRQTEEERKTPFYPPPLLNWKVTQEKVPWGIVLLLGGGFAMAKGCETSGLSEWMARQMEPLSSVRPAIITLILSCIVAMTTECTSNVATTTLFLPIFASMARSIGIHPLYVMIPCTLSASLAFMLPVATPPNAIVFAYGHLKVIDMVKTGLVMNILGIASVFLSVNTWGRAVFNLDKFPDWANLTHINT.

The next 8 membrane-spanning stretches (helical) occupy residues 13 to 33 (SFVI…LVPD), 53 to 73 (VIPV…LKVL), 80 to 100 (VQYM…ATAV), 124 to 144 (LMLG…NTAT), 218 to 238 (AASI…VLLG), 255 to 275 (SWFA…WLWL), 315 to 335 (PLSY…ILWF), and 357 to 377 (HVTD…VPSQ). N-linked (GlcNAc...) asparagine glycosylation occurs at asparagine 382. Transmembrane regions (helical) follow at residues 410-430 (VPWG…GCET), 443-463 (PLSS…VAMT), 491-511 (PLYV…LPVA), and 532-552 (TGLV…NTWG). N-linked (GlcNAc...) asparagine glycosylation is present at asparagine 566.

It belongs to the SLC13A/DASS transporter (TC 2.A.47) family. NADC subfamily. As to quaternary structure, homodimer. Expressed in liver, testis and brain.

It is found in the cell membrane. It catalyses the reaction citrate(out) + 4 Na(+)(out) = citrate(in) + 4 Na(+)(in). Inhibited by Li(+). In terms of biological role, high-affinity sodium/citrate cotransporter that mediates citrate entry into cells, which is a critical participant of biochemical pathways. May function in various metabolic processes in which citrate has a critical role such as energy production (Krebs cycle), fatty acid synthesis, cholesterol synthesis, glycolysis, and gluconeogenesis. Transports citrate into the cell in a Na(+)-dependent manner, recognizing the trivalent form of citrate (physiological pH) rather than the divalent form. Can recognize succinate as a substrate, but its affinity for succinate is several fold lower than for citrate. The stoichiometry is probably 4 Na(+) for each carboxylate, irrespective of whether the translocated substrate is divalent or trivalent, rendering the process electrogenic. Involved in the regulation of citrate levels in the brain. The sequence is that of Na(+)/citrate cotransporter (Slc13a5) from Rattus norvegicus (Rat).